The sequence spans 136 residues: uncharacterized protein (136 aa).

The next 2 membrane-spanning stretches (helical) occupy residues 25–47 and 78–97; these read ILKA…PHAF and ITGA…LLTA.

It is found in the cell membrane. This is an uncharacterized protein from Bacillus subtilis (strain 168).